Reading from the N-terminus, the 410-residue chain is Multifunctional CCA protein (410 aa).

Residues Gly-8 and Arg-11 each contribute to the ATP site. Residues Gly-8 and Arg-11 each contribute to the CTP site. 2 residues coordinate Mg(2+): Glu-21 and Asp-23. Residues Arg-91, Arg-137, and Arg-140 each coordinate ATP. 3 residues coordinate CTP: Arg-91, Arg-137, and Arg-140. An HD domain is found at 228–329; sequence TGVHVLSVLR…LELLQRFDVF (102 aa).

This sequence belongs to the tRNA nucleotidyltransferase/poly(A) polymerase family. Bacterial CCA-adding enzyme type 1 subfamily. As to quaternary structure, monomer. Can also form homodimers and oligomers. It depends on Mg(2+) as a cofactor. Ni(2+) is required as a cofactor.

It carries out the reaction a tRNA precursor + 2 CTP + ATP = a tRNA with a 3' CCA end + 3 diphosphate. It catalyses the reaction a tRNA with a 3' CCA end + 2 CTP + ATP = a tRNA with a 3' CCACCA end + 3 diphosphate. Functionally, catalyzes the addition and repair of the essential 3'-terminal CCA sequence in tRNAs without using a nucleic acid template. Adds these three nucleotides in the order of C, C, and A to the tRNA nucleotide-73, using CTP and ATP as substrates and producing inorganic pyrophosphate. tRNA 3'-terminal CCA addition is required both for tRNA processing and repair. Also involved in tRNA surveillance by mediating tandem CCA addition to generate a CCACCA at the 3' terminus of unstable tRNAs. While stable tRNAs receive only 3'-terminal CCA, unstable tRNAs are marked with CCACCA and rapidly degraded. In Ectopseudomonas mendocina (strain ymp) (Pseudomonas mendocina), this protein is Multifunctional CCA protein.